Here is a 461-residue protein sequence, read N- to C-terminus: D-phenylhydantoinase (461 aa).

A divalent metal cation is bound by residues histidine 59, histidine 61, and lysine 151. Residue lysine 151 is modified to N6-carboxylysine. Residue tyrosine 156 coordinates substrate. A divalent metal cation-binding residues include histidine 182 and histidine 239. Serine 286 lines the substrate pocket. An a divalent metal cation-binding site is contributed by aspartate 313. Asparagine 335 provides a ligand contact to substrate.

Belongs to the metallo-dependent hydrolases superfamily. Hydantoinase/dihydropyrimidinase family. As to quaternary structure, homotetramer. A divalent metal cation is required as a cofactor. Carboxylation allows a single lysine to coordinate two divalent metal cations.

It carries out the reaction D-5-phenylhydantoin + H2O = N-carbamoyl-D-phenylglycine + H(+). Its function is as follows. Catalyzes the stereospecific hydrolysis of the cyclic amide bond of D-hydantoin derivatives with an aromatic side chains at the 5'-position. Has no activity on dihydropyrimidines. The physiological function is unknown. The sequence is that of D-phenylhydantoinase from Shigella boydii serotype 4 (strain Sb227).